The sequence spans 323 residues: Synaptonemal complex central element protein 1 (323 aa).

A compositionally biased stretch (polar residues) spans 1 to 10 (MAGRPGSSNA). Disordered stretches follow at residues 1-31 (MAGR…SSQK) and 294-323 (KQEE…PSTK). 2 stretches are compositionally biased toward basic and acidic residues: residues 20-31 (DEARGQAESSQK) and 313-323 (SEEKDQEPSTK). A coiled-coil region spans residues 25 to 290 (QAESSQKIED…EKLGVQVLAQ (266 aa)).

This sequence belongs to the SYCE family. As to quaternary structure, homodimer. Found in a complex with SYCP1 and SYCE2. Interacts with SYCP1, SYCE2 and SYCE3. Interacts with SIX6OS1.

Its subcellular location is the nucleus. The protein localises to the chromosome. Functionally, major component of the transverse central element of synaptonemal complexes (SCS), formed between homologous chromosomes during meiotic prophase. Requires SYCP1 in order to be incorporated into the central element. May have a role in the synaptonemal complex assembly, stabilization and recombination. This chain is Synaptonemal complex central element protein 1 (SYCE1), found in Bos taurus (Bovine).